Reading from the N-terminus, the 147-residue chain is uncharacterized protein (147 aa).

The region spanning 50–140 is the Rhodanese domain; sequence NQKKAIIVDT…WNSENLPTTF (91 aa).

This is an uncharacterized protein from Buchnera aphidicola subsp. Schizaphis graminum (strain Sg).